The sequence spans 122 residues: Large ribosomal subunit protein bL12 (122 aa).

It belongs to the bacterial ribosomal protein bL12 family. Homodimer. Part of the ribosomal stalk of the 50S ribosomal subunit. Forms a multimeric L10(L12)X complex, where L10 forms an elongated spine to which 2 to 4 L12 dimers bind in a sequential fashion. Binds GTP-bound translation factors.

Forms part of the ribosomal stalk which helps the ribosome interact with GTP-bound translation factors. Is thus essential for accurate translation. The sequence is that of Large ribosomal subunit protein bL12 from Pseudomonas aeruginosa (strain LESB58).